The chain runs to 664 residues: MTIRILPARLANQIAAGEVVERPASVVKELVENSLDSGATKIDIDIEKGGAKLIRIRDNGSGIVKDELGLALSRHATSKIHTLDDLEAIMSLGFRGEALASISSVSRLTLTSRPATQEQAWSAYTEGRDMQVKLQPTAHPIGTTVEVVDLFFNTPARRKFLRTEKTEFAHIDELLKRIALSRFDVSITLRHNGKVIRQYRAAHNDLQAEKRLATVCGQAFVRCMLKIELEHQGLKLHGWITTPEGARQQSDLQYCYVNGRMMRDKLINHAIRQSYETSLKPEQFAAYVLFIELDPHQVDVNVHPAKHEVRFHQARLVHDFIYQALASALAQSDSIEQPQINESAFHYQAEPEVAPLGSFPAESNEVPQAVYHAIEKAPAYPRKAGQEQQLQPVAPLESSFSSEQGREVAPAPHNERNAWMESRSPARHTTSSNQSERYGEPAPSKQQVKAYAELLHTPDFPSQNVECHPSPSIASPVQELGKAVSVVAQRYLLTTTKAGCQLISLARAEFYRILGQLNGDKAPLKSQPLLVPLSLKLEKGLVHAAQEHQDRFARMGILFKMRNEKALMVMGVPAPLRQQNLQLLIPDLLSYAASQAQKEEQAKNDTAMAQWLALRVAKVKSHYTLSEAIQIISELEQLWQEKLPLQDAQLVTSVDFSATIAQLT.

Residues 382 to 447 form a disordered region; that stretch reads RKAGQEQQLQ…YGEPAPSKQQ (66 aa). The segment covering 427–436 has biased composition (polar residues); that stretch reads RHTTSSNQSE.

The protein belongs to the DNA mismatch repair MutL/HexB family.

This protein is involved in the repair of mismatches in DNA. It is required for dam-dependent methyl-directed DNA mismatch repair. May act as a 'molecular matchmaker', a protein that promotes the formation of a stable complex between two or more DNA-binding proteins in an ATP-dependent manner without itself being part of a final effector complex. This is DNA mismatch repair protein MutL from Vibrio vulnificus (strain YJ016).